Here is a 727-residue protein sequence, read N- to C-terminus: Ubiquitin carboxyl-terminal hydrolase BAP1 (727 aa).

The 232-residue stretch at 4-235 (GWLELESDPG…IRFNLMAVVP (232 aa)) folds into the UCH catalytic domain. An Arg-finger motif motif is present at residues 56–60 (RRSRR). The active-site Nucleophile is the Cys-91. His-169 acts as the Proton donor in catalysis. The segment at 273–351 (THKSQESQLP…SLNGVPPTPT (79 aa)) is disordered. Ser-292 is modified (phosphoserine). Residues 320-330 (CPQTTTHSPPS) are compositionally biased toward polar residues. The short motif at 363–366 (NHNY) is the HBM-like motif element. Residues Ser-369 and Ser-394 each carry the phosphoserine modification. Disordered regions lie at residues 372–435 (QEEE…DGQL) and 462–522 (SIKT…SPVT). Positions 394-407 (SDDEEDYEDEEEDV) are enriched in acidic residues. 2 stretches are compositionally biased toward polar residues: residues 426–435 (SLSNSSDGQL) and 478–522 (THSQ…SPVT). A Phosphothreonine modification is found at Thr-491. Ser-519, Ser-535, Ser-583, and Ser-595 each carry phosphoserine. The interval 573–622 (LTEGGKGSSPSTRSSQGSQGSSSLEEKEVVEVTDSRDKSGLNRSSEPLSG) is disordered. Residues 580–595 (SSPSTRSSQGSQGSSS) show a composition bias toward low complexity. The interval 594–719 (SSLEEKEVVE…QRKPDRRKRS (126 aa)) is interaction with BRCA1. A compositionally biased stretch (basic and acidic residues) spans 596 to 612 (LEEKEVVEVTDSRDKSG). The stretch at 628 to 659 (KELLALLKCVEAEIANYEACLKEEVEKRKKFK) forms a coiled coil. The interval 640–684 (EIANYEACLKEEVEKRKKFKIDDQRRTHNYDEFICTFISMLAQEG) is interaction with YY1. Residues 668-696 (NYDEFICTFISMLAQEGMLANLVEQNISV) enclose the ULD domain. The segment at 697 to 699 (RRR) is interaction with nucleosomal DNA forming a DNA clamp with ASXL1. A Classical bipartite Nuclear localization signal (NLS) motif is present at residues 697–720 (RRRQGVSIGRLHKQRKPDRRKRSR). The disordered stretch occupies residues 702 to 727 (VSIGRLHKQRKPDRRKRSRPYKAKRQ). The interval 711-727 (RKPDRRKRSRPYKAKRQ) is positively charged C-terminal extension (CTE). Positions 715–720 (RRKRSR) match the Nuclear localization signal motif. Residues 715 to 722 (RRKRSRPY) carry the Non-classical PY-nuclear localization signal (PY-NLS) motif.

This sequence belongs to the peptidase C12 family. BAP1 subfamily. As to quaternary structure, core component of the polycomb repressive deubiquitinase (PR-DUB) complex, at least composed of BAP1, one of ASXL1, ASXL2 or (probably) ASXL3, and one of MBD5 or MBD6. The PR-DUB core associates with a number of accessory proteins, including FOXK1, FOXK2, KDM1B, HCFC1, YY1 and OGT; KDM1B specifically associates with ASXL2 PR-DUB complexes. The BAP1 deubiquitinase activity is not required for PR-DUB assembly. Homodimerize (via coiled-coil hinge-region between the UCH and ULD domains) to mediate assembly of 2 copies of the BAP1-ASXL heterodimer into a bisymmetric tetramer; dimerization enhances association with nucleosomes. The PR-DUB complex associates with nucleosomes to mediate deubiquitination of 'lys-120' of histone H2AK118ub1 substrates; the association requires the positively charged C-terminal tail of BAP1. Interacts (via ULD domain) with ASXL1 (via DEUBAD domain); the interaction is direct and forms a ubiquitin binding cleft. The interaction with ASXL1 stabilizes BAP1 but is not required for nucleosome binding. Associates (via C-terminus) with nucleosome and chromatosome complexes through direct interaction with DNA and the histone3/4 dimer; this association displaces the histone-2A C-terminal tail, extending and orienting the H2AK118ub1 substrate towards the BAP1 deubiquitinase active site. Also interacts (via arginine finger) directly with the histone H2A-H2B acidic patch; this interaction is not critical for nucleosome-chromatosome association but may play a role in orienting the H2AK118ub1 substrate towards the PR-DUB complex active site. Interacts with BRCA1 (via the RING finger). Interacts (via HBM-like motif) with HCFC1. Interacts (via a C-terminal region overlapping the ULD domain) with YY1; the interaction is direct and requires the interaction with HCFC1. Interacts (when phosphorylated at Thr-491) with FOXK1. Interacts (when phosphorylated at Thr-491) with FOXK2; leading to recruitment of the PR-DUB complex and repression of FOXK2 target genes. Interacts (via non-classical PY-NLS) with TNPO1/transportin-1 (via HEAT repeats 8-12); the interaction is direct, mediates BAP1 nuclear localization and disrupts BAP1 homodimerization. Interacts (via C-terminus) with KPNA1/importin alpha5 and KPNA2/importin alpha1; these interactions can contribute to BAP1 nuclear localization but are less important than the interaction with TNPO1/transportin-1. The interaction with TNPO1/transportin-1 disrupts homodimerization and blocks ubiquitination by UBE2O. In terms of processing, ubiquitinated: monoubiquitinated at multiple sites within its nuclear localization signal (NLS) BY UBE2O, leading to cytoplasmic retention. Able to mediate autodeubiquitination via intramolecular interactions to counteract cytoplasmic retention. Monoubiquitinated on at least 4 sites near or within its PY-NLS.

The protein localises to the cytoplasm. It is found in the nucleus. The protein resides in the chromosome. The enzyme catalyses Thiol-dependent hydrolysis of ester, thioester, amide, peptide and isopeptide bonds formed by the C-terminal Gly of ubiquitin (a 76-residue protein attached to proteins as an intracellular targeting signal).. Functionally, deubiquitinating enzyme that plays a key role in chromatin by mediating deubiquitination of histone H2A and HCFC1. Catalytic component of the polycomb repressive deubiquitinase (PR-DUB) complex, a complex that specifically mediates deubiquitination of histone H2A monoubiquitinated at 'Lys-120' (H2AK119ub1). Does not deubiquitinate monoubiquitinated histone H2B. The PR-DUB complex is an epigenetic regulator of gene expression and acts as a transcriptional coactivator, affecting genes involved in development, cell communication, signaling, cell proliferation and cell viability. Antagonizes PRC1 mediated H2AK119ub1 monoubiquitination. As part of the PR-DUB complex, associates with chromatin enriched in histone marks H3K4me1, H3K4me3, and H3K27Ac, but not in H3K27me3. Acts as a regulator of cell growth by mediating deubiquitination of HCFC1 N-terminal and C-terminal chains, with some specificity toward 'Lys-48'-linked polyubiquitin chains compared to 'Lys-63'-linked polyubiquitin chains. Deubiquitination of HCFC1 does not lead to increase stability of HCFC1. Interferes with the BRCA1 and BARD1 heterodimer activity by inhibiting their ability to mediate ubiquitination and autoubiquitination. It however does not mediate deubiquitination of BRCA1 and BARD1. Able to mediate autodeubiquitination via intramolecular interactions to counteract monoubiquitination at the nuclear localization signal (NLS), thereby protecting it from cytoplasmic sequestration. Acts as a tumor suppressor. Negatively regulates epithelial-mesenchymal transition (EMT) of trophoblast stem cells during placental development by regulating genes involved in epithelial cell integrity, cell adhesion and cytoskeletal organization. The chain is Ubiquitin carboxyl-terminal hydrolase BAP1 (Bap1) from Rattus norvegicus (Rat).